The primary structure comprises 331 residues: Probable allantoicase (331 aa).

It belongs to the allantoicase family.

It carries out the reaction allantoate + H2O = (S)-ureidoglycolate + urea. Its pathway is nitrogen metabolism; (S)-allantoin degradation; (S)-ureidoglycolate from allantoate (aminidohydrolase route): step 1/1. This is Probable allantoicase from Pseudomonas fluorescens (strain SBW25).